We begin with the raw amino-acid sequence, 1207 residues long: DNA-directed RNA polymerase subunit beta (1207 aa).

It belongs to the RNA polymerase beta chain family. The RNAP catalytic core consists of 2 alpha, 1 beta, 1 beta' and 1 omega subunit. When a sigma factor is associated with the core the holoenzyme is formed, which can initiate transcription.

It carries out the reaction RNA(n) + a ribonucleoside 5'-triphosphate = RNA(n+1) + diphosphate. In terms of biological role, DNA-dependent RNA polymerase catalyzes the transcription of DNA into RNA using the four ribonucleoside triphosphates as substrates. The polypeptide is DNA-directed RNA polymerase subunit beta (Enterococcus faecalis (strain ATCC 700802 / V583)).